The following is a 221-amino-acid chain: GTP cyclohydrolase 1 (221 aa).

Zn(2+)-binding residues include Cys109, His112, and Cys180.

Belongs to the GTP cyclohydrolase I family. Toroid-shaped homodecamer, composed of two pentamers of five dimers.

The catalysed reaction is GTP + H2O = 7,8-dihydroneopterin 3'-triphosphate + formate + H(+). It functions in the pathway cofactor biosynthesis; 7,8-dihydroneopterin triphosphate biosynthesis; 7,8-dihydroneopterin triphosphate from GTP: step 1/1. This Serratia proteamaculans (strain 568) protein is GTP cyclohydrolase 1.